The sequence spans 95 residues: Aspartyl/glutamyl-tRNA(Asn/Gln) amidotransferase subunit C (95 aa).

Belongs to the GatC family. As to quaternary structure, heterotrimer of A, B and C subunits.

The enzyme catalyses L-glutamyl-tRNA(Gln) + L-glutamine + ATP + H2O = L-glutaminyl-tRNA(Gln) + L-glutamate + ADP + phosphate + H(+). It carries out the reaction L-aspartyl-tRNA(Asn) + L-glutamine + ATP + H2O = L-asparaginyl-tRNA(Asn) + L-glutamate + ADP + phosphate + 2 H(+). Its function is as follows. Allows the formation of correctly charged Asn-tRNA(Asn) or Gln-tRNA(Gln) through the transamidation of misacylated Asp-tRNA(Asn) or Glu-tRNA(Gln) in organisms which lack either or both of asparaginyl-tRNA or glutaminyl-tRNA synthetases. The reaction takes place in the presence of glutamine and ATP through an activated phospho-Asp-tRNA(Asn) or phospho-Glu-tRNA(Gln). The chain is Aspartyl/glutamyl-tRNA(Asn/Gln) amidotransferase subunit C from Marinobacter nauticus (strain ATCC 700491 / DSM 11845 / VT8) (Marinobacter aquaeolei).